The chain runs to 111 residues: Ribosome-binding factor A (111 aa).

This sequence belongs to the RbfA family. In terms of assembly, monomer. Binds 30S ribosomal subunits, but not 50S ribosomal subunits or 70S ribosomes.

The protein resides in the cytoplasm. Functionally, one of several proteins that assist in the late maturation steps of the functional core of the 30S ribosomal subunit. Associates with free 30S ribosomal subunits (but not with 30S subunits that are part of 70S ribosomes or polysomes). Required for efficient processing of 16S rRNA. May interact with the 5'-terminal helix region of 16S rRNA. The protein is Ribosome-binding factor A of Helicobacter acinonychis (strain Sheeba).